The primary structure comprises 785 residues: MSSAEMEQLLQAKTLAMHNNPTEMLPKVLETTASMYHNGNLSKLKLPLAKFFTQLVLDVVSMDSPIANTERPFIAAQYLPLLLAMAQSTADVLVYKNIVLIMCASYPLVLDLVAKTSNQEMFDQLCMLKKFVLSHWRTAYPLRATVDDETDVEQWLAQIDQNIGVKLATIKFISEVVLSQTKSPSGNEINSSTIPDNHPVLNKPALESEAKRLLDMLLNYLIEEQYMVSSVFIGIINSLSFVIKRRPQTTIRILSGLLRFNVDAKFPLEGKSDLNYKLSKRFVERAYKNFVQFGLKNQIITKSLSSGSGSSIYSKLTKISQTLHVIGEETKSKGILNFDPSKGNSKKTLSRQDKLKYISLWKRQLSALLSTLGVSTKTPTPVSAPATGSSTENMLDQLKILQKYTLNKASHQGNTFFNNSPKPISNTYSSVYSLMNSSNSNQDVTQLPNDILIKLSTEAILQMDSTKLITGLSIVASRYTDLMNTYINSVPSSSSSKRKSDDDDDGNDNEEVGNDGPTANSKKIKMETEPLAEEPEEPEDDDRMQKMLQEEESAQEISGDANKSTSAIKEIAPPFEPDSLTQDEKLKYLSKLTKKLFELSGRQDTTRAKSSSSSSILLDDDDSSSWLHVLIRLVTRGIEAQEASDLIREELLGFFIQDFEQRVSLIIEWLNEEWFFQTSLHQDPSNYKKWSLRVLESLGPFLENKHRRFFIRLMSELPSLQSDHLEALKPICLDPARSSLGFQTLKFLIMFRPPVQDTVRDLLHQLKQEDEGLHKQCDSLLDRLK.

Residues 487–544 (INSVPSSSSSKRKSDDDDDGNDNEEVGNDGPTANSKKIKMETEPLAEEPEEPEDDDRM) form a disordered region. At Ser500 the chain carries Phosphoserine. 2 stretches are compositionally biased toward acidic residues: residues 502–513 (DDDDGNDNEEVG) and 530–542 (PLAE…EDDD).

Component of the cleavage and polyadenylation factor (CPF) complex, which is composed of PTI1, SYC1, SSU72, GLC7, MPE1, REF2, PFS2, PTA1, YSH1/BRR5, SWD2, CFT2/YDH1, YTH1, CFT1/YHH1, FIP1 and PAP1. Component of the APT complex, which is a subcomplex of CPF, and is composed of PTI1, SYC1, SSU72, GLC7, REF2, PTA1 and SWD2.

Its subcellular location is the nucleus. In terms of biological role, essential in pre-tRNA processing. Component of the cleavage and polyadenylation factor (CPF) complex, which plays a key role in polyadenylation-dependent pre-mRNA 3'-end formation and cooperates with cleavage factors including the CFIA complex and NAB4/CFIB. Component of the APT complex, which may be involved in polyadenylation-independent transcript 3'-end formation. The polypeptide is Pre-tRNA-processing protein PTA1 (PTA1) (Saccharomyces cerevisiae (strain ATCC 204508 / S288c) (Baker's yeast)).